Consider the following 795-residue polypeptide: Protocadherin beta-5 (795 aa).

A signal peptide spans 1 to 30; it reads METALAKTPQKRQVMFLAILLLLWEAGSEA. The Extracellular segment spans residues 31–689; it reads VRYSIPEETE…AQADSLTVYL (659 aa). 5 consecutive Cadherin domains span residues 35–133, 138–242, 247–346, 351–450, and 455–560; these read IPEE…SPEF, MLLK…APEF, YEVQ…APEL, LSSP…APAF, and YTLF…SPFV. Asn169 carries N-linked (GlcNAc...) asparagine glycosylation. N6-acetyllysine is present on Lys296. N-linked (GlcNAc...) asparagine glycans are attached at residues Asn417 and Asn435. Asn566 carries an N-linked (GlcNAc...) asparagine glycan. Positions 567-670 constitute a Cadherin 6 domain; it reads GSAPCTELVP…LVDGFSQPYL (104 aa). Residues 690–710 traverse the membrane as a helical segment; it reads VVALASVSSLFLFSVLLFVAV. Over 711 to 795 the chain is Cytoplasmic; that stretch reads RLCRRSRAAP…AAFRNSFGLN (85 aa).

It localises to the cell membrane. Potential calcium-dependent cell-adhesion protein. May be involved in the establishment and maintenance of specific neuronal connections in the brain. The sequence is that of Protocadherin beta-5 (PCDHB5) from Pan troglodytes (Chimpanzee).